Here is a 206-residue protein sequence, read N- to C-terminus: Peroxynitrite isomerase (206 aa).

The GXWXGXG signature appears at 21–27 (GTWEGNG). Histidine 190 serves as a coordination point for heme b.

Belongs to the nitrobindin family. As to quaternary structure, homodimer. Heme b serves as cofactor.

The catalysed reaction is peroxynitrite = nitrate. It functions in the pathway nitrogen metabolism. Heme-binding protein able to scavenge peroxynitrite and to protect free L-tyrosine against peroxynitrite-mediated nitration, by acting as a peroxynitrite isomerase that converts peroxynitrite to nitrate. Therefore, this protein likely plays a role in peroxynitrite sensing and in the detoxification of reactive nitrogen and oxygen species (RNS and ROS, respectively). Is able to bind nitric oxide (NO) in vitro, but may act as a sensor of peroxynitrite levels in vivo. The chain is Peroxynitrite isomerase from Kocuria rhizophila (strain ATCC 9341 / DSM 348 / NBRC 103217 / DC2201).